Reading from the N-terminus, the 168-residue chain is Cell division inhibitor SulA (168 aa).

The segment at 106-112 (ALLTGNY) is ftsZ binding. The lon protease binding stretch occupies residues 161–168 (KIHSYLYH).

This sequence belongs to the SulA family. In terms of assembly, interacts with FtsZ. In terms of processing, is rapidly cleaved and degraded by the Lon protease once DNA damage is repaired.

Component of the SOS system and an inhibitor of cell division. Accumulation of SulA causes rapid cessation of cell division and the appearance of long, non-septate filaments. In the presence of GTP, binds a polymerization-competent form of FtsZ in a 1:1 ratio, thus inhibiting FtsZ polymerization and therefore preventing it from participating in the assembly of the Z ring. This mechanism prevents the premature segregation of damaged DNA to daughter cells during cell division. This is Cell division inhibitor SulA from Yersinia pestis bv. Antiqua (strain Antiqua).